A 517-amino-acid chain; its full sequence is Urethanase (517 aa).

Active-site charge relay system residues include Lys-98 and Ser-173. Ser-197 functions as the Acyl-ester intermediate in the catalytic mechanism.

It belongs to the amidase family. As to quaternary structure, homooctamer.

The catalysed reaction is urethane + H2O + H(+) = ethanol + NH4(+) + CO2. Its activity is regulated as follows. Exhibits poor salt tolerance but excellent tolerance to low concentrations of ethanol. EDTA has almost no impact on activity. Activity is increased in the presence of Ca(2+), Mg(2+) and Co(3+) and inhibited in the presence of Al(3+), Zn(2+) and Cu(2+). Hydrolase that can catalyze the degradation of ethyl carbamate (also called urethane), a probable human carcinogen widely found in alcoholic beverages. Can also use methyl carbamate, butyl carbamate, acetamide and urea. Also catalyzes the enantioselective hydrolysis of 2-phenylpropionamide, alpha-chlorophenylacetamide, 2-methyl-3-phenylpropionamide and alpha-methoxyphenylacetamide to the corresponding acids. Is inactive on benzamide and L-glutamine. The chain is Urethanase from Rhizobium radiobacter (Agrobacterium tumefaciens).